We begin with the raw amino-acid sequence, 451 residues long: FAD-dependent monooxygenase adrH (451 aa).

Residues Glu39, Gly53, and Arg112 each coordinate FAD. Residue Tyr196 is part of the active site. Positions 288 and 301 each coordinate FAD. Asn385 carries N-linked (GlcNAc...) asparagine glycosylation. Residues 426 to 446 (TLLWVSSLALFLFFPWLGSYL) traverse the membrane as a helical segment.

This sequence belongs to the paxM FAD-dependent monooxygenase family. It depends on FAD as a cofactor.

The protein resides in the membrane. The protein operates within secondary metabolite biosynthesis; terpenoid biosynthesis. FAD-dependent monooxygenase; part of the gene cluster that mediates the biosynthesis of andrastins, meroterpenoid compounds that exhibit inhibitory activity against ras farnesyltransferase, suggesting that they could be promising leads for antitumor agents. The first step of the pathway is the synthesis of 3,5-dimethylorsellinic acid (DMOA) by the polyketide synthase adrD via condensation of one acetyl-CoA starter unit with 3 malonyl-CoA units and 2 methylations. DMAO is then converted to farnesyl-DMAO by the prenyltransferase adrG. The methyltransferase adrK catalyzes the methylation of the carboxyl group of farnesyl-DMAO to farnesyl-DMAO methyl ester which is further converted to epoxyfarnesyl-DMAO methyl ester by the FAD-dependent monooxygenase adrH. The terpene cyclase adrI then catalyzes the carbon skeletal rearrangement to generate the andrastin E, the first compound in the pathway having the andrastin scaffold, with the tetracyclic ring system. The post-cyclization tailoring enzymes adrF, adrE, adrJ, and adrA, are involved in the conversion of andrastin E into andrastin A. The short chain dehydrogenase adrF is responsible for the oxidation of the C-3 a hydroxyl group of andrastin E to yield the corresponding ketone, andrastin D. The ketoreductase adrE stereoselectively reduces the carbonyl moiety to reverse the stereochemistry of the C-3 position to yield andrastin F. The acetyltransferase adrJ is the acetyltransferase that attaches the acetyl group to the C-3 hydroxyl group of andrastin F to yield andrastin C. Finally, the cytochrome P450 monooxygenase adrA catalyzes two sequential oxidation reactions of the C-23 methyl group, to generate the corresponding alcohol andrastin B, and aldehyde andrastin A. In Penicillium rubens (strain ATCC 28089 / DSM 1075 / NRRL 1951 / Wisconsin 54-1255) (Penicillium chrysogenum), this protein is FAD-dependent monooxygenase adrH.